The chain runs to 80 residues: Cytochrome c oxidase subunit 7A1, mitochondrial (80 aa).

A mitochondrion-targeting transit peptide spans 1–21 (MLAPRVSQALIRSFSSTARNR). At 22 to 46 (LKNRVPEKQKLFQEDNGIPVYLKGG) the chain is on the mitochondrial matrix side. The helical transmembrane segment at 47 to 75 (VVDHILYRVTMGLCLGGTAYGVYCLAWAS) threads the bilayer. Residues 76-80 (FPRNK) are Mitochondrial intermembrane-facing.

The protein belongs to the cytochrome c oxidase VIIa family. Component of the complex IV (CIV, cytochrome c oxidase), a multisubunit enzyme composed of 14 subunits. The complex is composed of a catalytic core of 3 subunits MT-CO1, MT-CO2 and MT-CO3, encoded in the mitochondrial DNA, and 11 supernumerary subunits COX4I1 (or COX4I2), COX5A, COX5B, COX6A2 (or COX6A1), COX6B1 (or COX6B2), COX6C, COX7A1 (or COX7A2), COX7B, COX7C, COX8B and NDUFA4, which are encoded in the nuclear genome. The complex exists as a monomer or a dimer and forms supercomplexes (SCs) in the inner mitochondrial membrane with NADH-ubiquinone oxidoreductase (complex I, CI) and ubiquinol-cytochrome c oxidoreductase (cytochrome b-c1 complex, complex III, CIII), resulting in different assemblies (supercomplex SCI(1)III(2)IV(1) and megacomplex MCI(2)III(2)IV(2)).

It localises to the mitochondrion inner membrane. It functions in the pathway energy metabolism; oxidative phosphorylation. In terms of biological role, component of the mitochondrial respiratory complex IV (CIV, also named cytochrome c oxidase complex), the last enzyme in the mitochondrial electron transport chain which drives oxidative phosphorylation. The CIV complex is the component of the respiratory chain that catalyzes the reduction of oxygen to water. Acts as an assembly factor that specifically drives the homodimerization of CIV complexes, mediating the formation of mitochondrial respiratory supercomplexes (respirasomes) containing two CIV: supercomplxes with two molecules of CIV show improved activity. Despite being highly expressed in brown adipose tissue, not required for thermogenesis. This Saimiri sciureus (Common squirrel monkey) protein is Cytochrome c oxidase subunit 7A1, mitochondrial (COX7A1).